Consider the following 410-residue polypeptide: Chitin deacetylase 3 (410 aa).

Positions 1–18 (MYGHLSLSTLSLLAVVAA) are cleaved as a signal peptide. Residues 19-39 (APFPESWLQPRDSDVSQLFRR) constitute a propeptide that is removed on maturation. N-linked (GlcNAc...) asparagine glycosylation is found at Asn61 and Asn80. Positions 124 to 314 (KVWALSFDDG…KAVANGWSVK (191 aa)) constitute a NodB homology domain. Catalysis depends on Asp131, which acts as the Proton acceptor. Asp131 serves as a coordination point for acetate. Asp132 is a Co(2+) binding site. N-linked (GlcNAc...) asparagine glycosylation is present at Asn149. Co(2+) is bound by residues His183 and His187. Residue Tyr225 participates in acetate binding. A glycan (N-linked (GlcNAc...) asparagine) is linked at Asn279. The active-site Proton donor is His289. The N-linked (GlcNAc...) asparagine glycan is linked to Asn293. Ser385 is lipidated: GPI-anchor amidated serine. A propeptide spans 386-410 (SSWPIANRPSLFVIACGLALAAIMV) (removed in mature form).

The protein belongs to the polysaccharide deacetylase family. Requires Co(2+) as cofactor.

The protein localises to the cell membrane. It carries out the reaction [(1-&gt;4)-N-acetyl-beta-D-glucosaminyl](n) + n H2O = chitosan + n acetate. Hydrolyzes the N-acetamido groups of N-acetyl-D-glucosamine residues in chitin to form chitosan and acetate. Chitosan is required to anchor melanin to the cell wall, for maintenance of cell wall integrity, and for proper cytokinesis. Chitosan offers an advantage during infection as it is less readily detected than chitin by host immunosurveillance mechanisms. The protein is Chitin deacetylase 3 of Cryptococcus neoformans var. neoformans serotype D (strain JEC21 / ATCC MYA-565) (Filobasidiella neoformans).